The sequence spans 491 residues: MPALMVVGCTSHAGKSLITAAICRLLRRQGWRVAPFKGQNMALNAYVTASGGEIGYAQAFQAWAAGVEPTIEMNPILLKPQGDMTSQVVLKGRAVGRTLAERYYQDYFEVGWEAICEALEQLQADYDWIVCEGAGSPAEINLKHRDLTNLRVAKHLQAPTLLLVDIDRGGSFAHLIGTLELLDPDERSLIRGFVFNKFRGRRELLQSGLDWLEERTGIPVLGVIPWIDRAFPSEDSLDLMERRRRKTQAEVTIAVIRLPRIANFTDFDPLESEPSVQVRYVGLQDELGYPDAVILPGSKTTISDLLDLQRSGLAQAIRDYAAAGGTVLGICGGFQMMGQHILDLEGTEGIEGQFEGLHLFPTQTWFTAEKTLRQRQTTARSPQAGLPITGYEIHQGQTRLDSDSEEFLPIFDDPKLGLCDRNGNLWGTYLHGIFDNGAWRRAWLNSLRHRRGLKALPTSIGHYQAQRDDLIDALADAVEPYLNLSPLLTAL.

The region spanning 250–439 is the GATase cobBQ-type domain; the sequence is EVTIAVIRLP…LHGIFDNGAW (190 aa). The active-site Nucleophile is Cys331. Residue His431 is part of the active site.

It belongs to the CobB/CobQ family. CobQ subfamily.

It functions in the pathway cofactor biosynthesis; adenosylcobalamin biosynthesis. Catalyzes amidations at positions B, D, E, and G on adenosylcobyrinic A,C-diamide. NH(2) groups are provided by glutamine, and one molecule of ATP is hydrogenolyzed for each amidation. In Synechococcus elongatus (strain ATCC 33912 / PCC 7942 / FACHB-805) (Anacystis nidulans R2), this protein is Cobyric acid synthase.